We begin with the raw amino-acid sequence, 199 residues long: Charged multivesicular body protein 1b (199 aa).

Positions 26–48 form a coiled coil; it reads DKEEKAEKAKIKKAIQKGNMEVA. Positions 132–156 are interaction with IST1; sequence MEDTMSSTTTLTTPQNQVDMLLQEM. Residues 167-199 form a disordered region; that stretch reads ELPQGQTGSVGTSVASAEQDELSQRLARLRDQV. Over residues 170–182 the composition is skewed to polar residues; it reads QGQTGSVGTSVAS. An interaction with SPAST region spans residues 174-199; it reads GSVGTSVASAEQDELSQRLARLRDQV. Residues 178–199 adopt a coiled-coil conformation; that stretch reads TSVASAEQDELSQRLARLRDQV. Positions 180–196 are interaction with VPS4A, MITD1 and STAMBP; that stretch reads VASAEQDELSQRLARLR. The interaction with VTA1 stretch occupies residues 180 to 199; it reads VASAEQDELSQRLARLRDQV. The interval 183 to 199 is interaction with VPS4B; the sequence is AEQDELSQRLARLRDQV. An MIT-interacting motif motif is present at residues 186–196; sequence DELSQRLARLR.

The protein belongs to the SNF7 family. As to quaternary structure, probable peripherally associated component of the endosomal sorting required for transport complex III (ESCRT-III). ESCRT-III components are thought to multimerize to form a flat lattice on the perimeter membrane of the endosome. Several assembly forms of ESCRT-III may exist that interact and act sequentially. Interacts with CHMP1A. Interacts with VTA1; the interaction probably involves the open conformation of CHMP1B. Interacts with CHMP2A. Interacts with VPS4A; the interaction is direct. Interacts with VPS4B; the interaction is direct. Interacts with SPAST (via MIT domain); the interaction is direct. Interacts with IST1. Interacts with MITD1. Interacts with STAMBP. Widely expressed. Expressed in pancreas, kidney, skeletal muscle, liver, lung, placenta and brain.

It is found in the cytoplasm. The protein localises to the cytosol. It localises to the endosome. The protein resides in the late endosome membrane. In terms of biological role, probable peripherally associated component of the endosomal sorting required for transport complex III (ESCRT-III) which is involved in multivesicular bodies (MVBs) formation and sorting of endosomal cargo proteins into MVBs. MVBs contain intraluminal vesicles (ILVs) that are generated by invagination and scission from the limiting membrane of the endosome and mostly are delivered to lysosomes enabling degradation of membrane proteins, such as stimulated growth factor receptors, lysosomal enzymes and lipids. The MVB pathway appears to require the sequential function of ESCRT-O, -I,-II and -III complexes. ESCRT-III proteins mostly dissociate from the invaginating membrane before the ILV is released. The ESCRT machinery also functions in topologically equivalent membrane fission events, such as the terminal stages of cytokinesis and the budding of enveloped viruses (HIV-1 and other lentiviruses). ESCRT-III proteins are believed to mediate the necessary vesicle extrusion and/or membrane fission activities, possibly in conjunction with the AAA ATPase VPS4. Involved in cytokinesis. Involved in recruiting VPS4A and/or VPS4B and SPAST to the midbody of dividing cells. Involved in HIV-1 p6- and p9-dependent virus release. The polypeptide is Charged multivesicular body protein 1b (CHMP1B) (Homo sapiens (Human)).